Here is a 924-residue protein sequence, read N- to C-terminus: Aminopeptidase 2 (924 aa).

The first 45 residues, 1–45, serve as a signal peptide directing secretion; the sequence is MASNNTSQRSGFSSFFCRLKTYFCNHFLCLFVLSFFPLSFRRLCL. A propeptide spanning residues 46–57 is cleaved from the precursor; it reads LCHLCEKSNLWL. Serine 58 bears the N-acetylserine; partial mark. N-linked (GlcNAc...) asparagine glycosylation is present at asparagine 92. A substrate-binding site is contributed by glutamate 194. Asparagine 229 is a glycosylation site (N-linked (GlcNAc...) asparagine). 327-331 contacts substrate; sequence GAMEN. Zn(2+) is bound at residue histidine 363. The active-site Proton acceptor is the glutamate 364. Zn(2+) contacts are provided by histidine 367 and glutamate 386.

It belongs to the peptidase M1 family. It depends on Zn(2+) as a cofactor.

The protein localises to the secreted. It is found in the cell wall. Its activity is regulated as follows. Inactivated by metal-chelating agents phenanthroline and EDTA. Inhibited by bestatin, an aminopeptidase inhibitor. Not inhibited by pepstatin A and PMSF, inhibitors of aspartic and the serine proteases, respectively. Not inhibited by carboxypeptidase inhibitor. Metalloprotease that specifically hydrolyzes peptides with N-terminal alanine, arginine and leucine residues. This is Aminopeptidase 2 (APE2) from Candida albicans (strain SC5314 / ATCC MYA-2876) (Yeast).